We begin with the raw amino-acid sequence, 241 residues long: Spheroidene monooxygenase (241 aa).

Belongs to the CrtA family. Heme is required as a cofactor.

The enzyme catalyses spheroidene + 4 reduced [2Fe-2S]-[ferredoxin] + 2 O2 + 4 H(+) = spheroiden-2-one + 4 oxidized [2Fe-2S]-[ferredoxin] + 3 H2O. It catalyses the reaction spirilloxanthin + 4 reduced [2Fe-2S]-[ferredoxin] + 2 O2 + 4 H(+) = 2-oxospirilloxanthin + 4 oxidized [2Fe-2S]-[ferredoxin] + 3 H2O. It carries out the reaction 2-oxospirilloxanthin + 4 reduced [2Fe-2S]-[ferredoxin] + 2 O2 + 4 H(+) = 2,2'-dioxospirilloxanthin + 4 oxidized [2Fe-2S]-[ferredoxin] + 3 H2O. The catalysed reaction is spheroidene + 2 reduced [2Fe-2S]-[ferredoxin] + O2 + 2 H(+) = 2-hydroxyspheroidene + 2 oxidized [2Fe-2S]-[ferredoxin] + H2O. The enzyme catalyses 2-hydroxyspheroidene + 2 reduced [2Fe-2S]-[ferredoxin] + O2 + 2 H(+) = 2,2-dihydroxyspheroidene + 2 oxidized [2Fe-2S]-[ferredoxin] + H2O. It catalyses the reaction 2,2-dihydroxyspheroidene = spheroiden-2-one + H2O. It carries out the reaction spirilloxanthin + 2 reduced [2Fe-2S]-[ferredoxin] + O2 + 2 H(+) = 2-hydroxyspirilloxanthin + 2 oxidized [2Fe-2S]-[ferredoxin] + H2O. The catalysed reaction is 2-hydroxyspirilloxanthin + 2 reduced [2Fe-2S]-[ferredoxin] + O2 + 2 H(+) = 2,2-dihydroxyspirilloxanthin + 2 oxidized [2Fe-2S]-[ferredoxin] + H2O. The enzyme catalyses 2,2-dihydroxyspirilloxanthin = 2-oxospirilloxanthin + H2O. It catalyses the reaction 2-oxospirilloxanthin + 2 reduced [2Fe-2S]-[ferredoxin] + O2 + 2 H(+) = 2'-hydroxy-2-oxospirilloxanthin + 2 oxidized [2Fe-2S]-[ferredoxin] + H2O. It carries out the reaction 2'-hydroxy-2-oxospirilloxanthin + 2 reduced [2Fe-2S]-[ferredoxin] + O2 + 2 H(+) = 2',2'-dihydroxy-2-oxospirilloxanthin + 2 oxidized [2Fe-2S]-[ferredoxin] + H2O. The catalysed reaction is 2',2'-dihydroxy-2-oxospirilloxanthin = 2,2'-dioxospirilloxanthin + H2O. It functions in the pathway carotenoid biosynthesis; spheroidene biosynthesis. Involved in the biosynthesis of the carotenoid spheroidene. Catalyzes the introduction of one keto group at the C-2 position of spheroidene. In vitro, can also catalyze the introduction of two keto groups at the C-2 and C-2' positions of spirilloxanthin, but spirilloxanthin biosynthesis pathway is not present in R.capsulatus. The chain is Spheroidene monooxygenase from Rhodobacter capsulatus (strain ATCC BAA-309 / NBRC 16581 / SB1003).